Consider the following 170-residue polypeptide: Translationally-controlled tumor protein homolog (170 aa).

Positions 1 to 170 (MLIYNDILNG…WKHGLKETKV (170 aa)) constitute a TCTP domain.

Belongs to the TCTP family.

It is found in the cytoplasm. Its subcellular location is the cytoskeleton. Involved in protein synthesis. Involved in microtubule stabilization. The chain is Translationally-controlled tumor protein homolog from Gibberella zeae (strain ATCC MYA-4620 / CBS 123657 / FGSC 9075 / NRRL 31084 / PH-1) (Wheat head blight fungus).